Here is a 270-residue protein sequence, read N- to C-terminus: MKPKMKYSTNKISTAKWKNTASKALCFKLGKSQQKAKEVCPMYFMKLRSGLMIKKEACYFRRETTKRPSLKTGRKHKRHLVLAACQQQSTVECFAFGISGVQKYTRALHDSSITGISPITEYLASLSTYNDQSITFALEDESYEIYVEDLKKDEKKDKVLLSYYESQHPSNESGDGVDGKMLMVTLSPTKDFWLHANNKEHSVELHKCEKPLPDQAFFVLHNMHSNCVSFECKTDPGVFIGVKDNHLALIKVDSSENLCTENILFKLSET.

The interval 1–65 (MKPKMKYSTN…EACYFRRETT (65 aa)) is homeodomain-like HTH domain. The propeptide occupies 1–94 (MKPKMKYSTN…CQQQSTVECF (94 aa)). Positions 64–111 (TTKRPSLKTGRKHKRHLVLAACQQQSTVECFAFGISGVQKYTRALHDS) are interaction with RELA.

This sequence belongs to the IL-1 family. Highly divergent. Forms a 1:1:1 heterotrimeric complex with its primary high-affinity receptor IL1RL1 and the coreceptor IL1RAP. Interacts with cargo receptor TMED10; the interaction mediates the translocation from the cytoplasm into the ERGIC (endoplasmic reticulum-Golgi intermediate compartment) and thereby secretion. As to quaternary structure, (Microbial infection) Interacts (in reduced form) with H.polygyrus ARI. Post-translationally, the full-length protein can be released from cells and is able to signal via the IL1RL1/ST2 receptor. However, proteolytic processing by CELA1, CSTG/cathepsin G and ELANE/neutrophil elastase produces C-terminal peptides that are more active than the unprocessed full length protein. May also be proteolytically processed by calpains. Proteolytic cleavage mediated by apoptotic caspases including CASP3 and CASP7 results in IL33 inactivation. In vitro proteolytic cleavage by CASP1 was reported but could not be confirmed in vivo suggesting that IL33 is probably not a direct substrate for that caspase. In terms of tissue distribution, expressed at high level in high endothelial venules found in tonsils, Peyer patches and mesenteric lymph nodes. Almost undetectable in placenta.

The protein resides in the nucleus. It is found in the chromosome. Its subcellular location is the cytoplasm. It localises to the cytoplasmic vesicle. The protein localises to the secretory vesicle. The protein resides in the secreted. Its function is as follows. Cytokine that binds to and signals through the IL1RL1/ST2 receptor which in turn activates NF-kappa-B and MAPK signaling pathways in target cells. Involved in the maturation of Th2 cells inducing the secretion of T-helper type 2-associated cytokines. Also involved in activation of mast cells, basophils, eosinophils and natural killer cells. Acts as an enhancer of polarization of alternatively activated macrophages. Acts as a chemoattractant for Th2 cells, and may function as an 'alarmin', that amplifies immune responses during tissue injury. Induces rapid UCP2-dependent mitochondrial rewiring that attenuates the generation of reactive oxygen species and preserves the integrity of Krebs cycle required for persistent production of itaconate and subsequent GATA3-dependent differentiation of inflammation-resolving alternatively activated macrophages. In terms of biological role, in quiescent endothelia the uncleaved form is constitutively and abundantly expressed, and acts as a chromatin-associated nuclear factor with transcriptional repressor properties, it may sequester nuclear NF-kappaB/RELA, lowering expression of its targets. This form is rapidely lost upon angiogenic or pro-inflammatory activation. This chain is Interleukin-33, found in Homo sapiens (Human).